Reading from the N-terminus, the 138-residue chain is Large ribosomal subunit protein uL16 (138 aa).

The span at 1-13 shows a compositional bias: basic residues; sequence MLQPARRKYRKEQ. A disordered region spans residues 1–22; sequence MLQPARRKYRKEQKGRNTGIAT.

Belongs to the universal ribosomal protein uL16 family. In terms of assembly, part of the 50S ribosomal subunit.

Functionally, binds 23S rRNA and is also seen to make contacts with the A and possibly P site tRNAs. The polypeptide is Large ribosomal subunit protein uL16 (Delftia acidovorans (strain DSM 14801 / SPH-1)).